A 371-amino-acid chain; its full sequence is Queuine tRNA-ribosyltransferase (371 aa).

The active-site Proton acceptor is the Asp-90. Substrate contacts are provided by residues 90-94 (DSGGF), Asp-144, Gln-188, and Gly-215. The segment at 246–252 (GVGTPED) is RNA binding. The Nucleophile role is filled by Asp-265. Residues 270–274 (TRNAR) form an RNA binding; important for wobble base 34 recognition region. Positions 303, 305, 308, and 334 each coordinate Zn(2+).

The protein belongs to the queuine tRNA-ribosyltransferase family. In terms of assembly, homodimer. Within each dimer, one monomer is responsible for RNA recognition and catalysis, while the other monomer binds to the replacement base PreQ1. Requires Zn(2+) as cofactor.

It carries out the reaction 7-aminomethyl-7-carbaguanine + guanosine(34) in tRNA = 7-aminomethyl-7-carbaguanosine(34) in tRNA + guanine. It participates in tRNA modification; tRNA-queuosine biosynthesis. In terms of biological role, catalyzes the base-exchange of a guanine (G) residue with the queuine precursor 7-aminomethyl-7-deazaguanine (PreQ1) at position 34 (anticodon wobble position) in tRNAs with GU(N) anticodons (tRNA-Asp, -Asn, -His and -Tyr). Catalysis occurs through a double-displacement mechanism. The nucleophile active site attacks the C1' of nucleotide 34 to detach the guanine base from the RNA, forming a covalent enzyme-RNA intermediate. The proton acceptor active site deprotonates the incoming PreQ1, allowing a nucleophilic attack on the C1' of the ribose to form the product. After dissociation, two additional enzymatic reactions on the tRNA convert PreQ1 to queuine (Q), resulting in the hypermodified nucleoside queuosine (7-(((4,5-cis-dihydroxy-2-cyclopenten-1-yl)amino)methyl)-7-deazaguanosine). This chain is Queuine tRNA-ribosyltransferase, found in Neisseria meningitidis serogroup C / serotype 2a (strain ATCC 700532 / DSM 15464 / FAM18).